A 293-amino-acid chain; its full sequence is Large ribosomal RNA subunit accumulation protein YCED homolog 1, chloroplastic (293 aa).

The N-terminal 42 residues, 1-42 (MYYPQPTVSLAAAVALLRPSLRRHSQRASSLLRSSTPPPWVS), are a transit peptide targeting the chloroplast.

It belongs to the DUF177 domain family. As to expression, highly expressed in shoots and leaves. Detected in roots, embryos and endosperm.

It localises to the plastid. The protein resides in the chloroplast. Its function is as follows. Plays a role in synthesis, processing and/or stability of 23S rRNA. Required for embryogenesis. May be involved in RPL23 transcript levels regulation in non-photosynthetic plastids. This Zea mays (Maize) protein is Large ribosomal RNA subunit accumulation protein YCED homolog 1, chloroplastic.